Reading from the N-terminus, the 529-residue chain is Tyrosinase (529 aa).

Positions 1-18 are cleaved as a signal peptide; the sequence is MLLAVLYCLLWSFQTSAG. Residues 19–476 lie on the Lumenal, melanosome side of the membrane; sequence HFPRACVSSK…YLEQASRIWS (458 aa). N-linked (GlcNAc...) asparagine glycans are attached at residues Asn86, Asn111, and Asn161. 3 residues coordinate Cu cation: His180, His202, and His211. Asn230 carries N-linked (GlcNAc...) asparagine glycosylation. The segment at 287–313 is disordered; the sequence is SLCNGTPEGPLRRNPGNHDKSRTPRLP. A glycan (N-linked (GlcNAc...) asparagine) is linked at Asn337. Cu cation contacts are provided by His363 and His367. N-linked (GlcNAc...) asparagine glycosylation occurs at Asn371. Cu cation is bound at residue His390. Residues 477-497 form a helical membrane-spanning segment; sequence WLLGAAMVGAVLTALLAGLVS. The Cytoplasmic portion of the chain corresponds to 498–529; sequence LLCRHKRKQLPEEKQPLLMEKEDYHSLYQSHL.

Belongs to the tyrosinase family. In terms of assembly, forms an OPN3-dependent complex with DCT in response to blue light in melanocytes. It depends on Cu(2+) as a cofactor. Post-translationally, glycosylated.

It is found in the melanosome membrane. The protein localises to the melanosome. It carries out the reaction 2 L-dopa + O2 = 2 L-dopaquinone + 2 H2O. It catalyses the reaction L-tyrosine + O2 = L-dopaquinone + H2O. The enzyme catalyses 2 5,6-dihydroxyindole-2-carboxylate + O2 = 2 indole-5,6-quinone-2-carboxylate + 2 H2O. In terms of biological role, this is a copper-containing oxidase that functions in the formation of pigments such as melanins and other polyphenolic compounds. Catalyzes the initial and rate limiting step in the cascade of reactions leading to melanin production from tyrosine. In addition to hydroxylating tyrosine to DOPA (3,4-dihydroxyphenylalanine), also catalyzes the oxidation of DOPA to DOPA-quinone, and possibly the oxidation of DHI (5,6-dihydroxyindole) to indole-5,6 quinone. This Homo sapiens (Human) protein is Tyrosinase.